Here is a 448-residue protein sequence, read N- to C-terminus: Tryptamine benzoyltransferase 2 (448 aa).

The interval 1-20 (MEITSSAMLKPAPTPTPHPL) is disordered. Residues H155 and D386 each act as proton acceptor in the active site.

This sequence belongs to the plant acyltransferase family.

In terms of biological role, hydroxycinnamoyl transferase that catalyzes the transfer of an acyl from benzoyl-CoA to tryptamine, to produce benzoyl tryptamine. Serotonin and tyramine serve as acyl acceptors in vitro. Specific for benzoyl-CoA as acyl donor. Has no activity with p-coumaroyl-CoA, caffeoyl-CoA, or feruloyl-CoA as acyl donors. This chain is Tryptamine benzoyltransferase 2, found in Oryza sativa subsp. japonica (Rice).